The chain runs to 631 residues: Poly(A)-specific ribonuclease PARN (631 aa).

A divalent metal cation is bound by residues Asp28 and Glu30. Positions 147 to 173 (EDRRSQSNGASTMSYISPNSSKTPVSI) are disordered. Over residues 152–170 (QSNGASTMSYISPNSSKTP) the composition is skewed to polar residues. Residues 178–244 (KGFIDKVVER…ERYIVISKVD (67 aa)) form the R3H domain. Positions 291 and 381 each coordinate a divalent metal cation. The tract at residues 568-631 (SPIQEEAASD…SVLFEVPDTW (64 aa)) is disordered.

It belongs to the CAF1 family. Component of a complex at least composed of cpeb1, cpsf1, papd4/gld2, pabpc1/ePAB, parn and sympk. A divalent metal cation is required as a cofactor. A 62 kDa form, which is produced by proteolytic cleavage, also exists. In terms of tissue distribution, in retina, it is constitutively present in most retinal cells, including the photoreceptors.

The protein localises to the cytoplasm. The protein resides in the nucleus. It catalyses the reaction Exonucleolytic cleavage of poly(A) to 5'-AMP.. Its function is as follows. 3'-exoribonuclease that has a preference for poly(A) tails of mRNAs, thereby efficiently degrading poly(A) tails. Exonucleolytic degradation of the poly(A) tail is often the first step in the decay of eukaryotic mRNAs. Required during meiotic maturation to silence certain maternal mRNAs translationally. Does not require an adenosine residue at the 3' end, however, the addition of 25 non-adenylate residues at the 3' terminus, or a 3' terminal phosphate is inhibitory. Involved in dormant mRNAs regulation during oocyte maturation by counteracting polyadenylation mediated by papd4/gld2nt in immature eggs. During maturation it is excluded from the ribonucleoprotein complex, allowing poly(A) elongation by papd4/gld2nt and activation of mRNAs. This is Poly(A)-specific ribonuclease PARN (parn) from Xenopus laevis (African clawed frog).